We begin with the raw amino-acid sequence, 402 residues long: Putative cytochrome P450 123 (402 aa).

Residue cysteine 350 participates in heme binding.

This sequence belongs to the cytochrome P450 family. Heme is required as a cofactor.

This Mycobacterium bovis (strain ATCC BAA-935 / AF2122/97) protein is Putative cytochrome P450 123 (cyp123).